Here is an 88-residue protein sequence, read N- to C-terminus: UPF0367 protein AM1_1885 (88 aa).

The protein belongs to the UPF0367 family.

The sequence is that of UPF0367 protein AM1_1885 from Acaryochloris marina (strain MBIC 11017).